The chain runs to 208 residues: Protein-L-isoaspartate O-methyltransferase (208 aa).

S59 is a catalytic residue.

Belongs to the methyltransferase superfamily. L-isoaspartyl/D-aspartyl protein methyltransferase family.

It is found in the cytoplasm. The catalysed reaction is [protein]-L-isoaspartate + S-adenosyl-L-methionine = [protein]-L-isoaspartate alpha-methyl ester + S-adenosyl-L-homocysteine. Its function is as follows. Catalyzes the methyl esterification of L-isoaspartyl residues in peptides and proteins that result from spontaneous decomposition of normal L-aspartyl and L-asparaginyl residues. It plays a role in the repair and/or degradation of damaged proteins. This is Protein-L-isoaspartate O-methyltransferase from Pectobacterium atrosepticum (strain SCRI 1043 / ATCC BAA-672) (Erwinia carotovora subsp. atroseptica).